Reading from the N-terminus, the 478-residue chain is Probable cyclin-dependent kinase 9 (478 aa).

Residues 1–17 (MSAQNYHAGLHQSSTQR) show a composition bias toward polar residues. The interval 1–55 (MSAQNYHAGLHQSSTQRPPKRPNTEHAQEPPKRALIGGQTTPSSSGGGQTPNGTN) is disordered. The span at 22 to 32 (PNTEHAQEPPK) shows a compositional bias: basic and acidic residues. The region spanning 85–413 (YEKLNKIGQG…SDEAEDDIWF (329 aa)) is the Protein kinase domain. ATP contacts are provided by residues 91–99 (IGQGTFGEV) and Lys114. The active-site Proton acceptor is the Asp217. The interval 444 to 478 (HANRGRHQNAQQRPNQQQARPSNAIPAGQYRDTIF) is disordered. Residues 451–464 (QNAQQRPNQQQARP) are compositionally biased toward low complexity.

The protein belongs to the protein kinase superfamily. CMGC Ser/Thr protein kinase family. CDC2/CDKX subfamily. Associates with cyclin-T (cit-1.1 or cit-1.2) to form P-TEFb.

It is found in the nucleus. The enzyme catalyses L-seryl-[protein] + ATP = O-phospho-L-seryl-[protein] + ADP + H(+). The catalysed reaction is L-threonyl-[protein] + ATP = O-phospho-L-threonyl-[protein] + ADP + H(+). It carries out the reaction [DNA-directed RNA polymerase] + ATP = phospho-[DNA-directed RNA polymerase] + ADP + H(+). Essential member of the cyclin-dependent kinase pair (CDK9/cyclin-T) complex, also called positive transcription elongation factor B (P-TEFb), which is proposed to facilitate the transition from abortive to production elongation by phosphorylating the CTD (C-terminal domain) of the large subunit of RNA polymerase II (RNAP II) and spt-5. The polypeptide is Probable cyclin-dependent kinase 9 (cdk-9) (Caenorhabditis elegans).